Reading from the N-terminus, the 651-residue chain is Probable potassium transport system protein Kup (651 aa).

A run of 12 helical transmembrane segments spans residues 41 to 61 (LVLGALGVVYGDIGTSPIYAF), 82 to 102 (VVSLIFWALTLVVTVKYVLFV), 130 to 150 (LILGVGICGAALFFGDAVITP), 163 to 183 (IVAPNLTPFVVPATVVILVTL), 194 to 214 (VAIVFGPIMALWFVALGASGL), 235 to 255 (FLTVSPAVAFVTVGAVFLAMT), 276 to 296 (WLWIVFPCLLLNYFGQAAFIL), 309 to 329 (MIPSFALWPMVLLATAATVIA), 366 to 386 (IYIPRVNLLLGLAVVILVLGF), 395 to 415 (AYGIAVTGNMLVTTVLLYIVM), 426 to 446 (ALPIILGFLVIDMLFFSANII), and 450 to 470 (EGGWASIGIATVLVLIMWTWV).

Belongs to the HAK/KUP transporter (TC 2.A.72) family.

The protein resides in the cell inner membrane. It carries out the reaction K(+)(in) + H(+)(in) = K(+)(out) + H(+)(out). Its function is as follows. Transport of potassium into the cell. Likely operates as a K(+):H(+) symporter. The polypeptide is Probable potassium transport system protein Kup (Brucella suis (strain ATCC 23445 / NCTC 10510)).